A 699-amino-acid polypeptide reads, in one-letter code: Auxin response factor 1 (699 aa).

The segment at residues 122-224 is a DNA-binding region (TF-B3); sequence FCKILTPSDT…EQRVGVRRLV (103 aa). 2 disordered regions span residues 539–565 and 680–699; these read TTTD…DSGQ and EPHP…KTGF. The PB1 domain maps to 595-684; it reads RTRIKVQMHG…DEKKIEPHPK (90 aa). Residues 687–699 are compositionally biased toward polar residues; sequence SSANPEQDQKTGF.

Belongs to the ARF family. Homodimers and heterodimers. Expressed in roots, culms, leaves and young panicles.

It is found in the nucleus. Functionally, auxin response factors (ARFs) are transcriptional factors that bind specifically to the DNA sequence 5'-TGTCTC-3' found in the auxin-responsive promoter elements (AuxREs). The polypeptide is Auxin response factor 1 (ARF1) (Oryza sativa subsp. japonica (Rice)).